A 259-amino-acid chain; its full sequence is 14-3-3-like protein (259 aa).

Residues 238–259 are disordered; sequence MQDPAAGDDREGADMKVEDAEP. The span at 244–259 shows a compositional bias: basic and acidic residues; the sequence is GDDREGADMKVEDAEP.

It belongs to the 14-3-3 family.

This chain is 14-3-3-like protein, found in Chlamydomonas reinhardtii (Chlamydomonas smithii).